A 450-amino-acid polypeptide reads, in one-letter code: Putative nucleolar protein 5-3 (450 aa).

Residues 252-370 (IAPNLTALVG…LEARLRNLEG (119 aa)) enclose the Nop domain. Residues 375–423 (ACEEEEEVNDKDTKKEADDEEEPKTEECSKKRKKEAELETVEDPAKKSK) are disordered. The segment covering 399–423 (TEECSKKRKKEAELETVEDPAKKSK) has biased composition (basic and acidic residues).

It belongs to the NOP5/NOP56 family.

It localises to the nucleus. The protein localises to the nucleolus. Its function is as follows. Required for 60S ribosomal subunit biogenesis. The protein is Putative nucleolar protein 5-3 (NOP5-3) of Arabidopsis thaliana (Mouse-ear cress).